The following is a 616-amino-acid chain: MALLQISEPGLSAAPHQRRLAAGIDLGTTNSLVATVRSGQAETLPDHEGRHLLPSVVHYQQQGHTVGYAARDNAAQDTANTISSVKRMMGRSLADIQSRYPHLPYRFQASENGLPMIETAAGLLNPVRVSADILKALAARASESLSGELDGVVITVPAYFDDAQRQGTKDAARLAGLHVLRLLNEPTAAAIAYGLDSGKEGVIAVYDLGGGTFDISILRLSCGVFEVLATGGDSALGGDDFDHLLADYIREQAGIADRSDNRVQRELLDAAIAAKIALSDADTVRVNVAGWQGEITREQFNDLIAALVKRTLLACRRALKDADVDPQEVLEVVMVGGSTRVPLVRERVGEFFGRTPLTAIDPDKVVAIGAAIQADILVGNKPDSEMLLLDVIPLSLGLETMGGLVEKVIPRNTTIPVARAQDFTTFKDGQTAMSIHVMQGERELAQDCRSLARFALRGIPALPAGGAHIRVTFQVDADGLLSVTAMEKSTGIEASIQVKPSYGLTDSEIASMIKDSMSFAEQDVKARMLAEQKVEAARVLESLTGALTADAALLSAAERQCIDDAAAHLNAVAQGDDVDAIEQAIKNVDKQTQEFAARRMDQSVRRALKGHSVDEV.

Belongs to the heat shock protein 70 family.

Chaperone involved in the maturation of iron-sulfur cluster-containing proteins. Has a low intrinsic ATPase activity which is markedly stimulated by HscB. Involved in the maturation of IscU. The sequence is that of Chaperone protein HscA from Salmonella arizonae (strain ATCC BAA-731 / CDC346-86 / RSK2980).